The sequence spans 637 residues: DNA mismatch repair protein MutL (637 aa).

The span at 353-371 shows a compositional bias: polar residues; it reads GQGQRPVSSASMPSASRQA. Positions 353–444 are disordered; that stretch reads GQGQRPVSSA…SEAASETPHD (92 aa). Basic and acidic residues predominate over residues 378 to 389; sequence DWIKEGVQDWDW. The span at 396-406 shows a compositional bias: pro residues; the sequence is PQNPPQNPPPG. The span at 430 to 444 shows a compositional bias: basic and acidic residues; the sequence is SGKELSEAASETPHD.

This sequence belongs to the DNA mismatch repair MutL/HexB family.

Its function is as follows. This protein is involved in the repair of mismatches in DNA. It is required for dam-dependent methyl-directed DNA mismatch repair. May act as a 'molecular matchmaker', a protein that promotes the formation of a stable complex between two or more DNA-binding proteins in an ATP-dependent manner without itself being part of a final effector complex. In Beijerinckia indica subsp. indica (strain ATCC 9039 / DSM 1715 / NCIMB 8712), this protein is DNA mismatch repair protein MutL.